Consider the following 216-residue polypeptide: Thiopurine S-methyltransferase (216 aa).

S-adenosyl-L-methionine is bound by residues Trp10, Leu45, Glu66, and Arg123.

Belongs to the class I-like SAM-binding methyltransferase superfamily. TPMT family.

It is found in the cytoplasm. It catalyses the reaction S-adenosyl-L-methionine + a thiopurine = S-adenosyl-L-homocysteine + a thiopurine S-methylether.. This Pseudomonas putida (strain ATCC 700007 / DSM 6899 / JCM 31910 / BCRC 17059 / LMG 24140 / F1) protein is Thiopurine S-methyltransferase.